The chain runs to 248 residues: Delayed minus-nitrogen induction protein 2 (248 aa).

A run of 4 helical transmembrane segments spans residues 26-46 (IFSN…CCSC), 110-130 (VHPV…VLTI), 144-164 (ISCL…MALA), and 186-206 (GVAA…FSLI).

This sequence belongs to the SUR7 family.

It is found in the membrane. The sequence is that of Delayed minus-nitrogen induction protein 2 (dni2) from Schizosaccharomyces pombe (strain 972 / ATCC 24843) (Fission yeast).